A 302-amino-acid polypeptide reads, in one-letter code: uncharacterized protein (302 aa).

Residues Asn32, Asn39, and Asn94 are each glycosylated (N-linked (GlcNAc...) asparagine). One can recognise a ShKT domain in the interval 80–115 (CRDTDMNCAVWVATNTSDCENVELVNSHCPRTCQTC). 3 disulfide bridges follow: Cys80–Cys115, Cys87–Cys108, and Cys98–Cys112. N-linked (GlcNAc...) asparagine glycosylation occurs at Asn181.

This is an uncharacterized protein from Caenorhabditis elegans.